The sequence spans 92 residues: Probable Fe(2+)-trafficking protein (92 aa).

The protein belongs to the Fe(2+)-trafficking protein family.

Functionally, could be a mediator in iron transactions between iron acquisition and iron-requiring processes, such as synthesis and/or repair of Fe-S clusters in biosynthetic enzymes. This chain is Probable Fe(2+)-trafficking protein, found in Shewanella piezotolerans (strain WP3 / JCM 13877).